Consider the following 841-residue polypeptide: Rhomboid-like protease 5 (841 aa).

Over residues 1 to 10 (MSSKGGSSRL) the composition is skewed to low complexity. A disordered region spans residues 1–289 (MSSKGGSSRL…GGDGGPRRHS (289 aa)). The span at 11-51 (GSKDLKKMTSRTERELRDSGRVRGEVERVEKRLRATAKVKE) shows a compositional bias: basic and acidic residues. Over residues 95–132 (LRPASSSPRLASSSRPTESTLPSSSSRALQGASSSSSS) the composition is skewed to low complexity. 3 stretches are compositionally biased toward basic and acidic residues: residues 154–163 (LRQEKKRLPE), 209–230 (RTAE…RGSV), and 243–275 (SSHE…RSGD). Helical transmembrane passes span 323–343 (FLMI…ELVL), 464–484 (MFRV…LLNV), 492–512 (WILE…VGGV), 526–546 (VTVG…PFSI), 571–590 (FGNM…GGLI), and 673–693 (FAAA…LLVP). Residue Ser-531 is the Nucleophile of the active site. His-585 is a catalytic residue.

This sequence belongs to the peptidase S54 family.

The protein resides in the membrane. It carries out the reaction Cleaves type-1 transmembrane domains using a catalytic dyad composed of serine and histidine that are contributed by different transmembrane domains.. In terms of biological role, serine protease involved in intramembrane proteolysis. Cleaves microneme adhesins, such as MIC2. This step is essential for efficient invasion of host cells. Catalyzes intramembrane proteolysis of AMA1. This chain is Rhomboid-like protease 5 (ROM5), found in Toxoplasma gondii.